Consider the following 173-residue polypeptide: dCTP deaminase (173 aa).

Residues 97–102 (RSSFAR) and Asp113 each bind dCTP. Glu123 (proton donor/acceptor) is an active-site residue. Residues Tyr155 and Gln162 each contribute to the dCTP site.

The protein belongs to the dCTP deaminase family. As to quaternary structure, homotrimer.

The catalysed reaction is dCTP + H2O + H(+) = dUTP + NH4(+). The protein operates within pyrimidine metabolism; dUMP biosynthesis; dUMP from dCTP (dUTP route): step 1/2. Catalyzes the deamination of dCTP to dUTP. In Acidianus ambivalens (Desulfurolobus ambivalens), this protein is dCTP deaminase.